Consider the following 273-residue polypeptide: 2,3,4,5-tetrahydropyridine-2,6-dicarboxylate N-succinyltransferase (273 aa).

Residues Arg-104 and Asp-141 each coordinate substrate.

The protein belongs to the transferase hexapeptide repeat family. As to quaternary structure, homotrimer.

It localises to the cytoplasm. It catalyses the reaction (S)-2,3,4,5-tetrahydrodipicolinate + succinyl-CoA + H2O = (S)-2-succinylamino-6-oxoheptanedioate + CoA. It participates in amino-acid biosynthesis; L-lysine biosynthesis via DAP pathway; LL-2,6-diaminopimelate from (S)-tetrahydrodipicolinate (succinylase route): step 1/3. This Buchnera aphidicola subsp. Schizaphis graminum (strain Sg) protein is 2,3,4,5-tetrahydropyridine-2,6-dicarboxylate N-succinyltransferase.